Reading from the N-terminus, the 714-residue chain is Putative glutamine--fructose-6-phosphate aminotransferase [isomerizing] (714 aa).

Cysteine 2 acts as the Nucleophile; for GATase activity in catalysis. A Glutamine amidotransferase type-2 domain is found at 2 to 321 (CGIFGYCNFL…DNDIAHIYDG (320 aa)). Residues 266 to 280 (STTSTFNHGSSTETP) are compositionally biased toward polar residues. Positions 266–285 (STTSTFNHGSSTETPAENGL) are disordered. SIS domains follow at residues 387-526 (WLTE…DLVS) and 559-704 (CDKK…VDLP).

It carries out the reaction D-fructose 6-phosphate + L-glutamine = D-glucosamine 6-phosphate + L-glutamate. The protein operates within nucleotide-sugar biosynthesis; UDP-N-acetyl-alpha-D-glucosamine biosynthesis; alpha-D-glucosamine 6-phosphate from D-fructose 6-phosphate: step 1/1. Its function is as follows. Involved in amino sugar synthesis (formation of chitin, supplies the amino sugars of asparagine-linked oligosaccharides of glycoproteins). The protein is Putative glutamine--fructose-6-phosphate aminotransferase [isomerizing] of Saccharomyces cerevisiae (strain YJM789) (Baker's yeast).